The sequence spans 300 residues: B1 kinase (300 aa).

The Protein kinase domain occupies 16–282 (WVVGPLIGKG…ITMVNSLTYF (267 aa)). ATP is bound by residues 22 to 30 (IGKGGFGSI) and Lys-45. Asn-147 (proton acceptor) is an active-site residue.

Belongs to the protein kinase superfamily. Ser/Thr protein kinase family. Poxviruses subfamily. As to quaternary structure, interacts with host JIP1; this interaction increases the amount of MAPK bound to JIP1 and subsequently increases the activity of transcription factors, such as JUN, that respond to these complexes. Interacts with protein OPG198; this interaction inhibits the repressive activity of OPG198 pseudokinase on viral replication factory formation. Mg(2+) serves as cofactor. Autophosphorylated.

Its subcellular location is the virion. The protein resides in the host cytoplasm. It catalyses the reaction L-seryl-[protein] + ATP = O-phospho-L-seryl-[protein] + ADP + H(+). The catalysed reaction is L-threonyl-[protein] + ATP = O-phospho-L-threonyl-[protein] + ADP + H(+). Its function is as follows. Essential serine/threonine-protein kinase that plays different role in the viral life cycle. Phosphorylates the host small ribosomal protein RACK1 thereby customizing the ribosomes to a state optimal for viral mRNAs (which contain poly-A leaders) but not for host mRNAs. Facilitates viral DNA replication by inhibiting host BANF1, a cellular host defense responsive to foreign DNA. Phosphorylates host BANF1 on serine and threonine residues; this leads to BANF1 relocalization to the cytoplasm, loss of dimerization and impaired DNA binding activity. Indeed, BANF1 activity depends on its DNA-binding property which is blocked by VPK1-mediated phosphorylation. Required for viral intermediate genes expression, probably by inhibiting host BANF1. Modulates cellular responses via host JUN by two different mechanisms, either by direct phosphorylation or by modulation of upstream JIP1-MAPK complexes. Seems to participate in the accumulation/processing of late proteins and thus in virion maturation. In addition, inhibits B12 repressive activity on viral DNA replication via a phosphorylation-dependent mechanism. The polypeptide is B1 kinase (OPG187) (Homo sapiens (Human)).